We begin with the raw amino-acid sequence, 229 residues long: Vitellogenin (229 aa).

Positions 1-136 (IVMLKNDNVE…SWILAAESCR (136 aa)) constitute a VWFD domain. An N-linked (GlcNAc...) asparagine glycan is attached at asparagine 198.

Expressed in liver, ovary and, to a lesser extent, in muscle, intestine, skin, kidney and heart.

Its function is as follows. Precursor of the egg-yolk proteins that are sources of nutrients during early development of oviparous organisms. Probably binds tetrodotoxin in the ovary. The protein is Vitellogenin of Takifugu pardalis (Panther puffer).